A 167-amino-acid polypeptide reads, in one-letter code: Large ribosomal subunit protein uL22 (167 aa).

The segment at 120–167 (GSTATTVEDEAPKAKGAKGAKAKKAPAKKAAAKKAPAKKFAGKKTAKR) is disordered. A compositionally biased stretch (basic residues) spans 134-167 (KGAKGAKAKKAPAKKAAAKKAPAKKFAGKKTAKR).

Belongs to the universal ribosomal protein uL22 family. Part of the 50S ribosomal subunit.

This protein binds specifically to 23S rRNA; its binding is stimulated by other ribosomal proteins, e.g. L4, L17, and L20. It is important during the early stages of 50S assembly. It makes multiple contacts with different domains of the 23S rRNA in the assembled 50S subunit and ribosome. Functionally, the globular domain of the protein is located near the polypeptide exit tunnel on the outside of the subunit, while an extended beta-hairpin is found that lines the wall of the exit tunnel in the center of the 70S ribosome. The protein is Large ribosomal subunit protein uL22 of Koribacter versatilis (strain Ellin345).